Consider the following 53-residue polypeptide: Conotoxin Cal9.2f (53 aa).

The propeptide occupies 1–6; the sequence is KKGVTL. Cystine bridges form between cysteine 15-cysteine 32, cysteine 20-cysteine 42, and cysteine 22-cysteine 47.

As to expression, expressed by the venom duct.

Its subcellular location is the secreted. Functionally, probable neurotoxin with unknown target. Possibly targets ion channels. In Californiconus californicus (California cone), this protein is Conotoxin Cal9.2f.